Reading from the N-terminus, the 384-residue chain is GDSL esterase/lipase At1g71691 (384 aa).

A signal peptide spans 1–27 (MAFHFRRLCFFSALLAVVLQLLHGVSG). Ser-62 functions as the Nucleophile in the catalytic mechanism. Active-site residues include Asp-348 and His-351.

The protein belongs to the 'GDSL' lipolytic enzyme family.

The protein localises to the secreted. This is GDSL esterase/lipase At1g71691 from Arabidopsis thaliana (Mouse-ear cress).